The sequence spans 252 residues: Transmembrane ascorbate-dependent reductase CYB561 (252 aa).

An N-acetylmethionine modification is found at Met-1. Over 1–17 (MESPAGRTPAPGALPYY) the chain is Cytoplasmic. The chain crosses the membrane as a helical span at residues 18 to 38 (VAFSQLLGLTVVAVTGAWLGA). The Cytochrome b561 domain occupies 20-221 (FSQLLGLTVV…FGAVVLYILT (202 aa)). Topologically, residues 39–52 (YRGGIAWESALQFN) are vesicular. A helical membrane pass occupies residues 53–73 (VHPLCMIIGLVFLQGDALLVY). His-54, Arg-74, and Lys-81 together coordinate heme b. At 74-85 (RVFRNEAKRTTK) the chain is on the cytoplasmic side. The L-ascorbate site is built by Lys-81 and Lys-85. The chain crosses the membrane as a helical span at residues 86-106 (ILHGLLHVLAFVIALVGLVAV). Residues His-88, 117–120 (DLYS), and His-122 each bind heme b. Over 107 to 125 (FDYHRKKGIADLYSLHSWC) the chain is Vesicular. A helical membrane pass occupies residues 126–146 (GILVFVLFLAQWLVGLGFFLF). Over 147 to 159 (PGASFSLRSRYRP) the chain is Cytoplasmic. Arg-154 serves as a coordination point for L-ascorbate. A helical membrane pass occupies residues 160–180 (QHVFFGAAIFLLSVGTALLGL). Heme b-binding residues include His-161 and Glu-182. Residues 181 to 199 (KEALLFQLGTKYSAFESEG) are Vesicular-facing. Residues 200–220 (VLANVLGLLLVAFGAVVLYIL) form a helical membrane-spanning segment. Over 221 to 252 (TRADWKRPLQAEEQALSMDFKTLTEGDSPSSQ) the chain is Cytoplasmic. Residue Lys-226 participates in heme b binding. Ser-248 and Ser-250 each carry phosphoserine.

It depends on heme b as a cofactor.

The protein resides in the cytoplasmic vesicle. It is found in the secretory vesicle. Its subcellular location is the chromaffin granule membrane. It carries out the reaction monodehydro-L-ascorbate radical(out) + L-ascorbate(in) = monodehydro-L-ascorbate radical(in) + L-ascorbate(out). Functionally, transmembrane reductase that uses ascorbate as an electron donor in the cytoplasm and transfers electrons across membranes to reduce monodehydro-L-ascorbate radical in the lumen of secretory vesicles. It is therefore involved the regeneration and homeostasis within secretory vesicles of ascorbate which in turn provides reducing equivalents needed to support the activity of intravesicular enzymes. The sequence is that of Transmembrane ascorbate-dependent reductase CYB561 (CYB561) from Sus scrofa (Pig).